The chain runs to 197 residues: Segregation and condensation protein B (197 aa).

It belongs to the ScpB family. Homodimer. Homodimerization may be required to stabilize the binding of ScpA to the Smc head domains. Component of a cohesin-like complex composed of ScpA, ScpB and the Smc homodimer, in which ScpA and ScpB bind to the head domain of Smc. The presence of the three proteins is required for the association of the complex with DNA.

It localises to the cytoplasm. In terms of biological role, participates in chromosomal partition during cell division. May act via the formation of a condensin-like complex containing Smc and ScpA that pull DNA away from mid-cell into both cell halves. This is Segregation and condensation protein B from Malacoplasma penetrans (strain HF-2) (Mycoplasma penetrans).